The sequence spans 563 residues: Pentatricopeptide repeat-containing protein At4g39620, chloroplastic (563 aa).

The N-terminal 47 residues, 1–47, are a transit peptide targeting the chloroplast; that stretch reads MDYLLTSPSSLRFSDFISSIPKETDHKWLRFSVNLGDARRSTRTRIT. PPR repeat units lie at residues 132–166, 167–197, 207–241, 242–276, 277–311, 312–346, 347–381, 382–416, and 417–451; these read DNGV…GCRP, DASV…YLDK, NVVT…PVSP, DVYT…ECKP, DIIT…KEKP, TLPT…NYIP, SFIT…DRVL, KAST…RVHP, and DAST…GIVP. Disordered regions lie at residues 468–501 and 520–551; these read PGSG…FQDK and NLSG…NNMM. The segment covering 520–537 has biased composition (basic and acidic residues); it reads NLSGHDKGSRDESRKPSQ.

The protein belongs to the PPR family. P subfamily.

The protein resides in the plastid. The protein localises to the chloroplast. Functionally, essential for embryo development. The protein is Pentatricopeptide repeat-containing protein At4g39620, chloroplastic of Arabidopsis thaliana (Mouse-ear cress).